The primary structure comprises 1192 residues: Chromosome partition protein Smc (1192 aa).

31–38 contacts ATP; that stretch reads PNGSGKSN. 4 coiled-coil regions span residues 164–197, 234–292, 333–369, and 396–464; these read AGIS…VDEV, LTLS…RSEL, SAIA…RDVE, and EHEA…DAKV. In terms of domain architecture, SMC hinge spans 522–636; the sequence is KDLVGIVADC…LVDTLATAIG (115 aa). 3 coiled-coil regions span residues 676–736, 772–902, and 986–1030; these read RSEL…AKLH, ELAV…EREA, and GSVN…INAD.

The protein belongs to the SMC family. In terms of assembly, homodimer.

It localises to the cytoplasm. Required for chromosome condensation and partitioning. The sequence is that of Chromosome partition protein Smc from Rhodopirellula baltica (strain DSM 10527 / NCIMB 13988 / SH1).